Here is a 531-residue protein sequence, read N- to C-terminus: Inactive beta-amylase 4, chloroplastic (531 aa).

Residues 1–62 (MTETGVIGCG…KRGRFITKLR (62 aa)) constitute a chloroplast transit peptide.

It belongs to the glycosyl hydrolase 14 family. As to expression, preferentially expressed in vascular tissue of cotyledons, leaves, petioles, stems, petals, siliques and roots, particularly in phloem. Also present in root tip.

Its subcellular location is the plastid. The protein resides in the chloroplast. No alpha-1,4-glucan hydrolase activity, including beta-amylase, alpha-amylase, a-glucosidase or alpha-amyloglucosidase. However, facilitates or regulates starch breakdown, especially at night, by a mechanism involving direct interaction with starch or other alpha-1,4-glucan. The polypeptide is Inactive beta-amylase 4, chloroplastic (BAM4) (Arabidopsis thaliana (Mouse-ear cress)).